We begin with the raw amino-acid sequence, 141 residues long: Hemoglobin subunit alpha (141 aa).

Positions 1-141 constitute a Globin domain; it reads VLSPADKSNV…VSTVLTSKYR (141 aa). Ser-3 carries the phosphoserine modification. 2 positions are modified to N6-succinyllysine: Lys-7 and Lys-11. The residue at position 16 (Lys-16) is an N6-acetyllysine; alternate. Position 16 is an N6-succinyllysine; alternate (Lys-16). Tyr-24 carries the phosphotyrosine modification. The residue at position 35 (Ser-35) is a Phosphoserine. An N6-succinyllysine modification is found at Lys-40. Ser-49 bears the Phosphoserine mark. His-58 is a binding site for O2. Residue His-87 participates in heme b binding. Residue Ser-102 is modified to Phosphoserine. At Thr-108 the chain carries Phosphothreonine. Phosphoserine occurs at positions 124 and 131. Phosphothreonine is present on residues Thr-134 and Thr-137. Position 138 is a phosphoserine (Ser-138).

It belongs to the globin family. In terms of assembly, heterotetramer of two alpha chains and two beta chains. In terms of tissue distribution, red blood cells.

Its function is as follows. Involved in oxygen transport from the lung to the various peripheral tissues. Hemopressin acts as an antagonist peptide of the cannabinoid receptor CNR1. Hemopressin-binding efficiently blocks cannabinoid receptor CNR1 and subsequent signaling. This chain is Hemoglobin subunit alpha (HBA), found in Leontocebus fuscicollis (Brown-mantled tamarin).